A 312-amino-acid chain; its full sequence is Pyridoxal kinase (312 aa).

M1 is modified (N-acetylmethionine). Pyridoxal-binding residues include S12 and T47. Position 47 (T47) interacts with pyridoxal 5'-phosphate. S59 bears the Phosphoserine mark. Residue D113 participates in ATP binding. D113 contributes to the Na(+) binding site. Position 118 (D118) interacts with Mg(2+). Residue T148 participates in Na(+) binding. ATP contacts are provided by residues 150–153 (NQFE) and 186–187 (TS). T186 is a binding site for Na(+). Residue S213 is modified to Phosphoserine. ATP is bound by residues 226–228 (VDA) and T233. 234 to 235 (GD) contributes to the pyridoxal 5'-phosphate binding site. Catalysis depends on D235, which acts as the Proton acceptor. S285 is modified (phosphoserine).

The protein belongs to the pyridoxine kinase family. Homodimer. The cofactor is Zn(2+). Mg(2+) serves as cofactor.

Its subcellular location is the cytoplasm. The protein resides in the cytosol. It carries out the reaction pyridoxal + ATP = pyridoxal 5'-phosphate + ADP + H(+). The catalysed reaction is pyridoxamine + ATP = pyridoxamine 5'-phosphate + ADP + H(+). It catalyses the reaction pyridoxine + ATP = pyridoxine 5'-phosphate + ADP + H(+). It participates in cofactor metabolism; pyridoxal 5'-phosphate salvage; pyridoxal 5'-phosphate from pyridoxal: step 1/1. The protein operates within cofactor metabolism; pyridoxal 5'-phosphate salvage; pyridoxine 5'-phosphate from pyridoxine: step 1/1. It functions in the pathway cofactor metabolism; pyridoxal 5'-phosphate salvage; pyridoxamine 5'-phosphate from pyridoxamine: step 1/1. Its activity is regulated as follows. Activity is increased in the presence of K(+)or Na(+). Catalyzes the phosphorylation of the dietary vitamin B6 vitamers pyridoxal (PL), pyridoxine (PN) and pyridoxamine (PM) to form pyridoxal 5'-phosphate (PLP), pyridoxine 5'-phosphate (PNP) and pyridoxamine 5'-phosphate (PMP), respectively. PLP is the active form of vitamin B6, and acts as a cofactor for over 140 different enzymatic reactions. The polypeptide is Pyridoxal kinase (PDXK) (Bos taurus (Bovine)).